We begin with the raw amino-acid sequence, 206 residues long: uncharacterized protein (206 aa).

One can recognise a MurNAc-LAA domain in the interval 32-201 (VYIDAGHGGE…AADAIVNGID (170 aa)).

It belongs to the N-acetylmuramoyl-L-alanine amidase 3 family.

This is an uncharacterized protein from Bacillus subtilis (strain 168).